A 1323-amino-acid chain; its full sequence is Alpha-factor-transporting ATPase (1323 aa).

The span at 1 to 10 (MFQEKSEKSS) shows a compositional bias: basic and acidic residues. Residues 1–23 (MFQEKSEKSSFPKRSSSLRSPSD) are disordered. Positions 12–23 (PKRSSSLRSPSD) are enriched in low complexity. N-linked (GlcNAc...) asparagine glycosylation occurs at Asn-37. Residues 42-62 (WPLILVGILLMGGSAIATLMN) traverse the membrane as a helical segment. An ABC transmembrane type-1 1 domain is found at 45–337 (ILVGILLMGG…ITELLAILNT (293 aa)). Asn-83 is a glycosylation site (N-linked (GlcNAc...) asparagine). A helical transmembrane segment spans residues 93-113 (LCVGLIGIGCCKMILVWLGMF). Residue Asn-136 is glycosylated (N-linked (GlcNAc...) asparagine). 4 consecutive transmembrane segments (helical) span residues 169–189 (ILAS…MSFY), 192–212 (WSTT…GWYF), 281–301 (VLKT…NYLL), and 315–335 (FSSC…LAIL). The ABC transporter 1 domain occupies 373 to 609 (IYFKNVWFES…EIVQNYKSQG (237 aa)). An ATP-binding site is contributed by 408 to 415 (GKSGSGKS). Asn-450 carries an N-linked (GlcNAc...) asparagine glycan. Residues 677–697 (LLGFGILLAIFQGVSSPVFSY) traverse the membrane as a helical segment. The 292-residue stretch at 678 to 969 (LGFGILLAIF…LIHQLPEITR (292 aa)) folds into the ABC transmembrane type-1 2 domain. The N-linked (GlcNAc...) asparagine glycan is linked to Asn-714. A helical transmembrane segment spans residues 724–744 (CISLSIAIFTGVTSYLSEFIL). 2 N-linked (GlcNAc...) asparagine glycosylation sites follow: Asn-777 and Asn-789. The next 3 membrane-spanning stretches (helical) occupy residues 801–821 (FFPL…WSIV), 828–848 (LVGI…GKIL), and 909–929 (IGFA…LFYG). The N-linked (GlcNAc...) asparagine glycan is linked to Asn-939. Residues 941–961 (SQLLQVITLLSFTISNASILI) traverse the membrane as a helical segment. Asn-991, Asn-1030, and Asn-1039 each carry an N-linked (GlcNAc...) asparagine glycan. Residues 1035–1321 (ISFNNVSFSY…DGEFTKITKT (287 aa)) enclose the ABC transporter 2 domain. 1071–1078 (GQSGSGKS) is a binding site for ATP. An N-linked (GlcNAc...) asparagine glycan is attached at Asn-1097. A helical transmembrane segment spans residues 1120-1140 (GLLCQTIAIVPQFPKFFSGTI). Asn-1143, Asn-1149, and Asn-1157 each carry an N-linked (GlcNAc...) asparagine glycan. Residues 1170–1190 (ILKLVNLHQFIVSLPQGLLTI) form a helical membrane-spanning segment. N-linked (GlcNAc...) asparagine glycosylation occurs at Asn-1192. The segment covering 1194–1208 (SDNDNDNGNENENEN) has biased composition (acidic residues). The disordered stretch occupies residues 1194-1217 (SDNDNDNGNENENENENGNTISTS).

This sequence belongs to the ABC transporter superfamily. Alpha-factor sex pheromone exporter (TC 3.A.1.206) family.

It localises to the membrane. The catalysed reaction is an [alpha-factor](in) + ATP + H2O = an [alpha-factor](out) + ADP + phosphate + H(+). The sequence is that of Alpha-factor-transporting ATPase (HST6) from Candida albicans (strain WO-1) (Yeast).